Here is a 399-residue protein sequence, read N- to C-terminus: Rhodopsin, G0-coupled (399 aa).

Residues 1–17 (MPFPLNRTDTALVISPS) are Extracellular-facing. Asparagine 6 is a glycosylation site (N-linked (GlcNAc...) asparagine). Residues 18–43 (EFRIIGIFISICCIIGVLGNLLIIIV) form a helical membrane-spanning segment. Residues 44-55 (FAKRRSVRRPIN) lie on the Cytoplasmic side of the membrane. A helical transmembrane segment spans residues 56-81 (FFVLNLAVSDLIVALLGYPMTAASAF). At 82–95 (SNRWIFDNIGCKIY) the chain is on the extracellular side. Cysteines 92 and 169 form a disulfide. The helical transmembrane segment at 96–115 (AFLCFNSGVISIMTHAALSF) threads the bilayer. The Cytoplasmic segment spans residues 116–134 (CRYIIICQYGYRKKITQTT). The chain crosses the membrane as a helical span at residues 135 to 158 (VLRTLFSIWSFAMFWTLSPLFGWS). Residues 159 to 182 (SYVIEVVPVSCSVNWYGHGLGDVS) are Extracellular-facing. A helical transmembrane segment spans residues 183-210 (YTISVIVAVYVFPLSIIVFSYGMILQEK). At 211–240 (VCKDSRKNGIRAQQRYTPRFIQDIEQRVTF) the chain is on the cytoplasmic side. A helical transmembrane segment spans residues 241-263 (ISFLMMAAFMVAWTPYAIMSALA). Residues 264-271 (IGSFNVEN) are Extracellular-facing. Residues 272 to 295 (SFAALPTLFAKASCAYNPFIYAFT) traverse the membrane as a helical segment. N6-(retinylidene)lysine is present on lysine 282. At 296-399 (NANFRDTVVE…NTFTADFSVI (104 aa)) the chain is on the cytoplasmic side.

This sequence belongs to the G-protein coupled receptor 1 family. Opsin subfamily. Phosphorylated on some or all of the serine and threonine residues present in the C-terminal region. As to expression, retina. Expressed in the hyperpolarizing cell layer of the photoreceptor cells with its photoreceptive region adjacent to the lens.

Its subcellular location is the membrane. Its function is as follows. Visual pigments are the light-absorbing molecules that mediate vision. They consist of an apoprotein, opsin, covalently linked to cis-retinal. In Mizuhopecten yessoensis (Japanese scallop), this protein is Rhodopsin, G0-coupled (SCOP2).